Reading from the N-terminus, the 967-residue chain is Zinc finger protein with KRAB and SCAN domains 2 (967 aa).

A Glycyl lysine isopeptide (Lys-Gly) (interchain with G-Cter in SUMO2) cross-link involves residue lysine 22. An SCAN box domain is found at 45 to 127 (RKCFRQFCYE…ALVVHLEKET (83 aa)). Residues 150–205 (WEVADFQPEQVETQPRAVSREEPGSLHSGHQEQLNRKRERRPLPKNARPSPWVPAL) form a disordered region. The span at 167-185 (VSREEPGSLHSGHQEQLNR) shows a compositional bias: basic and acidic residues. Positions 229 to 300 (VKDVHVARGF…GLHSSNKRSI (72 aa)) constitute a KRAB domain. Glycyl lysine isopeptide (Lys-Gly) (interchain with G-Cter in SUMO2) cross-links involve residues lysine 242, lysine 259, lysine 277, lysine 337, lysine 482, and lysine 529. Low complexity predominate over residues 586-602 (RASAPSPSTPEEVPSPS). The tract at residues 586–626 (RASAPSPSTPEEVPSPSRQERGGIEVEPQEPTGWEPEETSQ) is disordered. 2 positions are modified to phosphoserine: serine 591 and serine 600. Residues lysine 734, lysine 745, and lysine 752 each participate in a glycyl lysine isopeptide (Lys-Gly) (interchain with G-Cter in SUMO2) cross-link. C2H2-type zinc fingers lie at residues 775–797 (YKCGVCGKCFGRSRSLIRHQRIH), 803–825 (FKCLDCGKSFNDSSNFGAHQRIH), 831–853 (YRCGECGKCFSQSSSLIIHQRTH), 859–881 (YQCGECGKSFTNSSHFSAHRRVH), 887–909 (YKCVDCEKSFNNCTRFREHRRIH), and 915–937 (YGCAQCGKRFSKSSVLTKHREVH). The disordered stretch occupies residues 941 to 967 (KPLPHPPSLYCPENPHKGKTDEFRKTF). The segment covering 954 to 967 (NPHKGKTDEFRKTF) has biased composition (basic and acidic residues).

This sequence belongs to the krueppel C2H2-type zinc-finger protein family.

Its subcellular location is the nucleus. May be involved in transcriptional regulation. The protein is Zinc finger protein with KRAB and SCAN domains 2 (ZKSCAN2) of Homo sapiens (Human).